Here is a 329-residue protein sequence, read N- to C-terminus: Isopenicillin N synthase (329 aa).

R87, Y91, S183, and Y189 together coordinate isopenicillin N. 6 residues coordinate N-[(5S)-5-amino-5-carboxypentanoyl]-L-cysteinyl-D-valine: R87, Y91, S183, Y189, H212, and D214. Positions 180 to 286 (TLSSVSLIRY…RLSLPFFLNA (107 aa)) constitute a Fe2OG dioxygenase domain. H212, D214, and H268 together coordinate Fe(2+). Position 277 (R277) interacts with 2-oxoglutarate. Residue S279 participates in isopenicillin N binding. S279 lines the N-[(5S)-5-amino-5-carboxypentanoyl]-L-cysteinyl-D-valine pocket.

It belongs to the iron/ascorbate-dependent oxidoreductase family. Fe cation is required as a cofactor. Requires L-ascorbate as cofactor.

It carries out the reaction N-[(5S)-5-amino-5-carboxypentanoyl]-L-cysteinyl-D-valine + O2 = isopenicillin N + 2 H2O. The protein operates within antibiotic biosynthesis; penicillin G biosynthesis; penicillin G from L-alpha-aminoadipate and L-cysteine and L-valine: step 2/3. Its function is as follows. Removes, in the presence of oxygen, 4 hydrogen atoms from delta-L-(alpha-aminoadipyl)-L-cysteinyl-D-valine (ACV) to form the azetidinone and thiazolidine rings of isopenicillin. The sequence is that of Isopenicillin N synthase (pcbC) from Streptomyces jumonjinensis.